A 275-amino-acid chain; its full sequence is Putative phosphoenolpyruvate synthase regulatory protein (275 aa).

157–164 (GVSRCGKT) is a binding site for ADP.

Belongs to the pyruvate, phosphate/water dikinase regulatory protein family. PSRP subfamily.

It carries out the reaction [pyruvate, water dikinase] + ADP = [pyruvate, water dikinase]-phosphate + AMP + H(+). The enzyme catalyses [pyruvate, water dikinase]-phosphate + phosphate + H(+) = [pyruvate, water dikinase] + diphosphate. Its function is as follows. Bifunctional serine/threonine kinase and phosphorylase involved in the regulation of the phosphoenolpyruvate synthase (PEPS) by catalyzing its phosphorylation/dephosphorylation. The protein is Putative phosphoenolpyruvate synthase regulatory protein of Bordetella pertussis (strain Tohama I / ATCC BAA-589 / NCTC 13251).